Here is a 449-residue protein sequence, read N- to C-terminus: Packaging protein 1 (449 aa).

The interval Met1–Asp77 is disordered. Position 171–178 (Gly171–Ser178) interacts with ATP. Residues Arg440–Lys449 form a DNA-binding region.

Belongs to the adenoviridae packaging protein 1 family. As to quaternary structure, homodimer. Part of a genome packaging complex composed of packaging proteins 1, 2 and 3; this complex specifically binds to the packaging sequence on the left end of viral genomic DNA and performs packaging of the viral genome. Interacts with protein 33K.

The protein localises to the virion. The protein resides in the host nucleus. Its subcellular location is the host nucleoplasm. It localises to the host nucleolus. Its function is as follows. Component of the packaging machinery which encapsidates the viral DNA into preformed capsids and transcriptional activator of the viral major late promoter (MLP). Binds, along with packaging proteins 2 and 3, to the specific packaging sequence on the left end of viral genomic DNA and displays ATPase activity thereby providing the power stroke of the packaging machinery. The activity of packaging protein IVa2 is stimulated by protein 33K which acts as a terminase. May be the protein that pumps DNA into the capsid powered by ATP hydrolysis. Specifically binds to the 5'-CG-3' nucleotides of the repeats making up the packaging sequence. Component of the DEF-A and DEF-B transcription factors that bind downstream elements of the major late promoter (MLP), and stimulate transcription from the MLP after initiation of viral DNA replication. DEF-A is a heterodimer packaging proteins 1 and 2 and DEF-B is a homodimer of packaging protein 1. This Homo sapiens (Human) protein is Packaging protein 1.